A 172-amino-acid polypeptide reads, in one-letter code: uncharacterized protein (172 aa).

Residues 3-171 enclose the PfpI endopeptidase domain; sequence KKVAIILTNE…FNREIVNQLN (169 aa).

Belongs to the peptidase C56 family.

This is an uncharacterized protein from Staphylococcus saprophyticus subsp. saprophyticus (strain ATCC 15305 / DSM 20229 / NCIMB 8711 / NCTC 7292 / S-41).